We begin with the raw amino-acid sequence, 943 residues long: Isoleucine--tRNA ligase (943 aa).

The short motif at 59–69 (PYANGQIHLGH) is the 'HIGH' region element. Glu577 contributes to the L-isoleucyl-5'-AMP binding site. The short motif at 618–622 (KMSKS) is the 'KMSKS' region element. Lys621 is an ATP binding site. Residues Cys906, Cys909, Cys926, and Cys929 each contribute to the Zn(2+) site.

Belongs to the class-I aminoacyl-tRNA synthetase family. IleS type 1 subfamily. As to quaternary structure, monomer. Requires Zn(2+) as cofactor.

It is found in the cytoplasm. It carries out the reaction tRNA(Ile) + L-isoleucine + ATP = L-isoleucyl-tRNA(Ile) + AMP + diphosphate. Its function is as follows. Catalyzes the attachment of isoleucine to tRNA(Ile). As IleRS can inadvertently accommodate and process structurally similar amino acids such as valine, to avoid such errors it has two additional distinct tRNA(Ile)-dependent editing activities. One activity is designated as 'pretransfer' editing and involves the hydrolysis of activated Val-AMP. The other activity is designated 'posttransfer' editing and involves deacylation of mischarged Val-tRNA(Ile). In Xylella fastidiosa (strain 9a5c), this protein is Isoleucine--tRNA ligase.